Reading from the N-terminus, the 233-residue chain is Purine nucleoside phosphorylase DeoD-type (233 aa).

A purine D-ribonucleoside is bound at residue H4. Residues G20, R24, R43, and 87 to 90 each bind phosphate; that span reads RIGT. Residues 179–181 and 203–204 contribute to the a purine D-ribonucleoside site; these read EME and SD. The active-site Proton donor is the D204.

This sequence belongs to the PNP/UDP phosphorylase family. As to quaternary structure, homohexamer; trimer of homodimers.

It catalyses the reaction a purine D-ribonucleoside + phosphate = a purine nucleobase + alpha-D-ribose 1-phosphate. The enzyme catalyses a purine 2'-deoxy-D-ribonucleoside + phosphate = a purine nucleobase + 2-deoxy-alpha-D-ribose 1-phosphate. Its function is as follows. Catalyzes the reversible phosphorolytic breakdown of the N-glycosidic bond in the beta-(deoxy)ribonucleoside molecules, with the formation of the corresponding free purine bases and pentose-1-phosphate. The chain is Purine nucleoside phosphorylase DeoD-type from Helicobacter pylori (strain ATCC 700392 / 26695) (Campylobacter pylori).